The chain runs to 67 residues: Alpha-actitoxin-Ms11a-3 (67 aa).

Residues 1 to 24 (MASKIFFVLAVFLVMSAVLPESFA) form the signal peptide. 3 disulfide bridges follow: C26-C41, C33-C46, and C40-C61. At K66 the chain carries Lysine amide.

It localises to the secreted. It is found in the nematocyst. Alpha-toxins act on postsynaptic membranes, they bind to the nicotinic acetylcholine receptors (nAChR) and thus inhibit them. This toxin shows inhibition against mouse alpha-1-beta-1-delta-epsilon (CHRNA1-CHRNB1-CHRND-CHRNE) (IC(50)=1215 nM), rat alpha-3-beta-4/CHRNA3-CHRNB4 (IC(50)=5.173 uM), rat alpha-7/CHRNA7 (IC(50)=4.786 uM), human alpha-7/CHRNA7 (IC(50)=8.869 uM), and rat alpha-9-alpha-10/CHRNA9-CHRNA10 (IC(50)=202 nM). Also competes with alpha-bungarotoxin for binding to orthosteric sites on muscle-type T.carlifornicus (IC(50)=256 nM) and human alpha-7/CHRNA7 nAChRs (IC(50)=19.81 uM). This chain is Alpha-actitoxin-Ms11a-3, found in Metridium senile (Brown sea anemone).